We begin with the raw amino-acid sequence, 685 residues long: Threonine--tRNA ligase (685 aa).

Positions 1-28 (MTSPAPEHSAAPLRVPAGTTAGTAVREA) are disordered. The TGS domain occupies 1-65 (MTSPAPEHSA…EVDVDVEPVA (65 aa)). The segment at 262–568 (DHRKLGTELD…LTEHYAGAFP (307 aa)) is catalytic. Zn(2+)-binding residues include C367, H418, and H545.

This sequence belongs to the class-II aminoacyl-tRNA synthetase family. In terms of assembly, homodimer. Requires Zn(2+) as cofactor.

Its subcellular location is the cytoplasm. It catalyses the reaction tRNA(Thr) + L-threonine + ATP = L-threonyl-tRNA(Thr) + AMP + diphosphate + H(+). Functionally, catalyzes the attachment of threonine to tRNA(Thr) in a two-step reaction: L-threonine is first activated by ATP to form Thr-AMP and then transferred to the acceptor end of tRNA(Thr). Also edits incorrectly charged L-seryl-tRNA(Thr). This is Threonine--tRNA ligase from Rhodococcus erythropolis (strain PR4 / NBRC 100887).